The chain runs to 128 residues: Serum amyloid A-4 protein (128 aa).

Residues 1–18 form the signal peptide; sequence MKLFIGLIFCSLVMGVSS. Residues 93-128 form a disordered region; it reads SSEREEDQVSNRRAEEWGRSGQDPDHFRPAGLPKKY. Residues 99–120 show a composition bias toward basic and acidic residues; it reads DQVSNRRAEEWGRSGQDPDHFR.

This sequence belongs to the SAA family. Apolipoprotein of the HDL complex.

Its subcellular location is the secreted. In terms of biological role, major acute phase reactant. The chain is Serum amyloid A-4 protein from Sus scrofa (Pig).